The sequence spans 88 residues: Small ribosomal subunit protein uS15 (88 aa).

It belongs to the universal ribosomal protein uS15 family. Part of the 30S ribosomal subunit. Forms a bridge to the 50S subunit in the 70S ribosome, contacting the 23S rRNA.

Its function is as follows. One of the primary rRNA binding proteins, it binds directly to 16S rRNA where it helps nucleate assembly of the platform of the 30S subunit by binding and bridging several RNA helices of the 16S rRNA. Functionally, forms an intersubunit bridge (bridge B4) with the 23S rRNA of the 50S subunit in the ribosome. In Variovorax paradoxus (strain S110), this protein is Small ribosomal subunit protein uS15.